Reading from the N-terminus, the 86-residue chain is Neurotoxin LmNaTx34.1 (86 aa).

Positions 1 to 18 are cleaved as a signal peptide; it reads MKTVILVVIALMVIEVQG. The 67-residue stretch at 19 to 85 folds into the LCN-type CS-alpha/beta domain; the sequence is DGYLMVRAGI…IWTYEKNTCS (67 aa). Disulfide bonds link Cys32–Cys84, Cys36–Cys57, Cys43–Cys64, and Cys47–Cys66.

It belongs to the long (4 C-C) scorpion toxin superfamily. Sodium channel inhibitor family. Beta subfamily. Expressed by the venom gland.

It is found in the secreted. Binds voltage-independently at site-4 of sodium channels (Nav) and shift the voltage of activation toward more negative potentials thereby affecting sodium channel activation and promoting spontaneous and repetitive firing. In Lychas mucronatus (Chinese swimming scorpion), this protein is Neurotoxin LmNaTx34.1.